The chain runs to 47 residues: Lysis protein for colicin E5 (47 aa).

Residues 1 to 19 (MKKITWIILLLLAAIILAA) form the signal peptide. Cys-20 is lipidated: N-palmitoyl cysteine. A lipid anchor (S-diacylglycerol cysteine) is attached at Cys-20.

It localises to the cell outer membrane. In terms of biological role, lysis proteins are required for both colicin release and partial cell lysis. The protein is Lysis protein for colicin E5 (lys) of Escherichia coli.